The chain runs to 407 residues: Prolyl hydroxylase EGLN2 (407 aa).

Low complexity-rich tracts occupy residues 1–24 and 57–75; these read MDSP…SSEP and ASAG…TASP. Disordered regions lie at residues 1 to 34, 50 to 89, and 108 to 157; these read MDSP…RARM, CPGV…GELR, and AAQG…CSSG. The Bipartite nuclear localization signal motif lies at 89–134; it reads RPLQSEGAAALVTKGCQRLAAQGARPEAPKRKWAEDGGDAPSPSKR. Ser-130 is modified (phosphoserine). Positions 225-235 are beta(2)beta(3) 'finger-like' loop; sequence VSQRAIPPRSI. In terms of domain architecture, Fe2OG dioxygenase spans 278-376; that stretch reads GRTKAMVACY…RYAITVWYFD (99 aa). Fe cation-binding residues include His-297, Asp-299, and His-358. Arg-367 lines the 2-oxoglutarate pocket.

In terms of assembly, interacts (preferably isoform p40) with SIAH2; the interaction targets both SIAH2 isoforms for proteasomal degradation in vitro. Interacts with LIMD1, WTIP and AJUBA. Fe(2+) serves as cofactor. Requires L-ascorbate as cofactor. Post-translationally, ubiquitinated by SIAH1 and/or SIAH2 in response to the unfolded protein response (UPR), leading to its degradation. In terms of tissue distribution, expressed in adult and fetal heart, brain, liver, lung, skeletal muscle, and kidney. Also expressed in testis and placenta. Highest levels in adult brain, placenta, lung, kidney, and testis. Expressed in hormone responsive tissues, including normal and cancerous mammary, ovarian and prostate epithelium.

Its subcellular location is the nucleus. It carries out the reaction L-prolyl-[protein] + 2-oxoglutarate + O2 = trans-4-hydroxy-L-prolyl-[protein] + succinate + CO2. It catalyses the reaction L-prolyl-[hypoxia-inducible factor alpha subunit] + 2-oxoglutarate + O2 = trans-4-hydroxy-L-prolyl-[hypoxia-inducible factor alpha subunit] + succinate + CO2. In terms of biological role, prolyl hydroxylase that mediates hydroxylation of proline residues in target proteins, such as ATF4, IKBKB, CEP192 and HIF1A. Target proteins are preferentially recognized via a LXXLAP motif. Cellular oxygen sensor that catalyzes, under normoxic conditions, the post-translational formation of 4-hydroxyproline in hypoxia-inducible factor (HIF) alpha proteins. Hydroxylates a specific proline found in each of the oxygen-dependent degradation (ODD) domains (N-terminal, NODD, and C-terminal, CODD) of HIF1A. Also hydroxylates HIF2A. Has a preference for the CODD site for both HIF1A and HIF2A. Hydroxylated HIFs are then targeted for proteasomal degradation via the von Hippel-Lindau ubiquitination complex. Under hypoxic conditions, the hydroxylation reaction is attenuated allowing HIFs to escape degradation resulting in their translocation to the nucleus, heterodimerization with HIF1B, and increased expression of hypoxy-inducible genes. EGLN2 is involved in regulating hypoxia tolerance and apoptosis in cardiac and skeletal muscle. Also regulates susceptibility to normoxic oxidative neuronal death. Links oxygen sensing to cell cycle and primary cilia formation by hydroxylating the critical centrosome component CEP192 which promotes its ubiquitination and subsequent proteasomal degradation. Hydroxylates IKBKB, mediating NF-kappa-B activation in hypoxic conditions. Also mediates hydroxylation of ATF4, leading to decreased protein stability of ATF4. This chain is Prolyl hydroxylase EGLN2, found in Homo sapiens (Human).